The following is a 488-amino-acid chain: Acetyl-coenzyme A carboxylase carboxyl transferase subunit beta, chloroplastic (488 aa).

Positions 227-488 (LWIQCDNCYG…LHAFFPLNTN (262 aa)) constitute a CoA carboxyltransferase N-terminal domain. Zn(2+) is bound by residues Cys-231, Cys-234, Cys-247, and Cys-250. The C4-type zinc-finger motif lies at 231–250 (CDNCYGLMYKKVKMNVCEQC).

It belongs to the AccD/PCCB family. As to quaternary structure, acetyl-CoA carboxylase is a heterohexamer composed of biotin carboxyl carrier protein, biotin carboxylase and 2 subunits each of ACCase subunit alpha and ACCase plastid-coded subunit beta (accD). The cofactor is Zn(2+). Accumulates in fatty acids synthesizing tissues such as embryos, expanding leaves, flower buds, flowers, and developing siliques.

The protein resides in the plastid. It is found in the chloroplast membrane. Its subcellular location is the chloroplast stroma. The enzyme catalyses N(6)-carboxybiotinyl-L-lysyl-[protein] + acetyl-CoA = N(6)-biotinyl-L-lysyl-[protein] + malonyl-CoA. Its pathway is lipid metabolism; malonyl-CoA biosynthesis; malonyl-CoA from acetyl-CoA: step 1/1. Component of the acetyl coenzyme A carboxylase (ACC) complex. Biotin carboxylase (BC) catalyzes the carboxylation of biotin on its carrier protein (BCCP) and then the CO(2) group is transferred by the transcarboxylase to acetyl-CoA to form malonyl-CoA. The sequence is that of Acetyl-coenzyme A carboxylase carboxyl transferase subunit beta, chloroplastic from Arabidopsis thaliana (Mouse-ear cress).